The following is a 320-amino-acid chain: Endolytic peptidoglycan transglycosylase RlpA (320 aa).

This sequence belongs to the RlpA family.

Functionally, lytic transglycosylase with a strong preference for naked glycan strands that lack stem peptides. The chain is Endolytic peptidoglycan transglycosylase RlpA from Rickettsia prowazekii (strain Madrid E).